Consider the following 125-residue polypeptide: Phosphoribosyl-AMP cyclohydrolase (125 aa).

Mg(2+) is bound at residue Asp-86. Cys-87 lines the Zn(2+) pocket. Asp-88 and Asp-90 together coordinate Mg(2+). Residues Cys-103 and Cys-110 each contribute to the Zn(2+) site.

This sequence belongs to the PRA-CH family. Homodimer. Mg(2+) is required as a cofactor. Requires Zn(2+) as cofactor.

It is found in the cytoplasm. The catalysed reaction is 1-(5-phospho-beta-D-ribosyl)-5'-AMP + H2O = 1-(5-phospho-beta-D-ribosyl)-5-[(5-phospho-beta-D-ribosylamino)methylideneamino]imidazole-4-carboxamide. It participates in amino-acid biosynthesis; L-histidine biosynthesis; L-histidine from 5-phospho-alpha-D-ribose 1-diphosphate: step 3/9. Catalyzes the hydrolysis of the adenine ring of phosphoribosyl-AMP. The chain is Phosphoribosyl-AMP cyclohydrolase from Erythrobacter litoralis (strain HTCC2594).